Consider the following 392-residue polypeptide: Succinate--CoA ligase [ADP-forming] subunit beta (392 aa).

The region spanning lysine 9–glutamate 244 is the ATP-grasp domain. ATP is bound by residues lysine 46, glycine 53 to glycine 55, glutamate 99, leucine 102, and glutamate 107. The Mg(2+) site is built by asparagine 199 and aspartate 213. Substrate is bound by residues asparagine 264 and glycine 321–valine 323.

Belongs to the succinate/malate CoA ligase beta subunit family. In terms of assembly, heterotetramer of two alpha and two beta subunits. The cofactor is Mg(2+).

It catalyses the reaction succinate + ATP + CoA = succinyl-CoA + ADP + phosphate. The enzyme catalyses GTP + succinate + CoA = succinyl-CoA + GDP + phosphate. It functions in the pathway carbohydrate metabolism; tricarboxylic acid cycle; succinate from succinyl-CoA (ligase route): step 1/1. In terms of biological role, succinyl-CoA synthetase functions in the citric acid cycle (TCA), coupling the hydrolysis of succinyl-CoA to the synthesis of either ATP or GTP and thus represents the only step of substrate-level phosphorylation in the TCA. The beta subunit provides nucleotide specificity of the enzyme and binds the substrate succinate, while the binding sites for coenzyme A and phosphate are found in the alpha subunit. The chain is Succinate--CoA ligase [ADP-forming] subunit beta from Wolinella succinogenes (strain ATCC 29543 / DSM 1740 / CCUG 13145 / JCM 31913 / LMG 7466 / NCTC 11488 / FDC 602W) (Vibrio succinogenes).